Consider the following 126-residue polypeptide: Translation initiation factor 5A (126 aa).

At Lys36 the chain carries Hypusine.

Belongs to the eIF-5A family.

The protein localises to the cytoplasm. Functionally, functions by promoting the formation of the first peptide bond. The polypeptide is Translation initiation factor 5A (Haloarcula marismortui (strain ATCC 43049 / DSM 3752 / JCM 8966 / VKM B-1809) (Halobacterium marismortui)).